The primary structure comprises 130 residues: C-X-C motif chemokine 5 (130 aa).

Positions 1-37 are cleaved as a signal peptide; the sequence is MSFQLRSSARIPSRSCSSFTLLAFLLLFTLPQHRAQA. 2 disulfides stabilise this stretch: Cys50–Cys76 and Cys52–Cys93.

It belongs to the intercrine alpha (chemokine CxC) family. As to quaternary structure, monomer. Homodimer.

Its subcellular location is the secreted. Functionally, may participate in the recruitment of inflammatory cells by injured or infected tissue. This Rattus norvegicus (Rat) protein is C-X-C motif chemokine 5 (Cxcl5).